The chain runs to 236 residues: CBS domain-containing protein CBSX1, chloroplastic (236 aa).

The transit peptide at 1-53 directs the protein to the chloroplast; sequence MDAVLYSVPLSFTPLRASSSPSSPYLLLPRFLSVQPCHKFTFSRSFPSKSRIP. The interval 47–66 is disordered; the sequence is PSKSRIPSASSAAGSTLMTN. Ser-54 carries the post-translational modification N-acetylserine. CBS domains follow at residues 81–142 and 175–231; these read MTKK…GRTE and MTPA…IKRS.

Its subcellular location is the plastid. It is found in the chloroplast. The polypeptide is CBS domain-containing protein CBSX1, chloroplastic (CBSX1) (Arabidopsis thaliana (Mouse-ear cress)).